The primary structure comprises 779 residues: Catalase-peroxidase (779 aa).

Residues 148–270 constitute a cross-link (tryptophyl-tyrosyl-methioninium (Trp-Tyr) (with M-296)); that stretch reads WHSAGTYRIT…LGAVQMGLIY (123 aa). His149 acts as the Proton acceptor in catalysis. The segment at residues 270–296 is a cross-link (tryptophyl-tyrosyl-methioninium (Tyr-Met) (with W-148)); sequence YVNPEGPNGKPDPIAAAKDIRETFFRM. His311 lines the heme b pocket.

It belongs to the peroxidase family. Peroxidase/catalase subfamily. In terms of assembly, homodimer or homotetramer. Requires heme b as cofactor. Post-translationally, formation of the three residue Trp-Tyr-Met cross-link is important for the catalase, but not the peroxidase activity of the enzyme.

It catalyses the reaction H2O2 + AH2 = A + 2 H2O. It carries out the reaction 2 H2O2 = O2 + 2 H2O. Its function is as follows. Bifunctional enzyme with both catalase and broad-spectrum peroxidase activity. This chain is Catalase-peroxidase, found in Bradyrhizobium diazoefficiens (strain JCM 10833 / BCRC 13528 / IAM 13628 / NBRC 14792 / USDA 110).